The primary structure comprises 348 residues: Phosphoribosylformylglycinamidine cyclo-ligase (348 aa).

Belongs to the AIR synthase family.

It is found in the cytoplasm. It catalyses the reaction 2-formamido-N(1)-(5-O-phospho-beta-D-ribosyl)acetamidine + ATP = 5-amino-1-(5-phospho-beta-D-ribosyl)imidazole + ADP + phosphate + H(+). The protein operates within purine metabolism; IMP biosynthesis via de novo pathway; 5-amino-1-(5-phospho-D-ribosyl)imidazole from N(2)-formyl-N(1)-(5-phospho-D-ribosyl)glycinamide: step 2/2. The protein is Phosphoribosylformylglycinamidine cyclo-ligase of Cereibacter sphaeroides (strain ATCC 17029 / ATH 2.4.9) (Rhodobacter sphaeroides).